Consider the following 517-residue polypeptide: Zinc finger protein AEBP2 (517 aa).

The tract at residues 1–229 (MAAAITDMAD…DSEDSISSTI (229 aa)) is disordered. Alanine 2 is modified (N-acetylalanine). Phosphoserine is present on residues serine 18 and serine 24. Over residues 36 to 51 (PEEEEEEEEEEEEAEA) the composition is skewed to acidic residues. Over residues 61 to 78 (GGSGGGGGGGGGGVGGGE) the composition is skewed to gly residues. A compositionally biased stretch (acidic residues) spans 94 to 121 (GEDEDEEEDDEEEEDESSSSGGGEEESS). A compositionally biased stretch (low complexity) spans 122 to 150 (AESLVGSSGGSSSDETRSLSPGAASSSSG). Serine 141 is modified (phosphoserine). Over residues 152-163 (GDGKEGLEEPKG) the composition is skewed to basic and acidic residues. Gly residues-rich tracts occupy residues 166-175 (GSQGGGGGGS) and 185-196 (GDEGYGTGGGGS). Serine 206, serine 210, and serine 211 each carry phosphoserine. Positions 209-294 (MSSDGEPLSR…IHVDGQRGGV (86 aa)) are interaction with RBBP4. Residues 261–286 (YNCCWDQCQACFNSSPDLADHIRSIH) form a C2H2-type 1 zinc finger. Residues 300 to 322 (KGCKVYNTPSTSQSWLQRHMLTH) form a C2H2-type 2; degenerate zinc finger. A C2H2-type 3 zinc finger spans residues 328–352 (FKCVVGGCNASFASQGGLARHVPTH). Positions 352 to 365 (HFSQQNSSKVSSQP) are enriched in polar residues. A disordered region spans residues 352 to 394 (HFSQQNSSKVSSQPKAKEESPSKAGMNKRRKLKNKRRRSLPRP). The span at 377–392 (MNKRRKLKNKRRRSLP) shows a compositional bias: basic residues. Position 390 is a phosphoserine (serine 390). The segment at 407–478 (RHRAICFNLS…QLKTKVVHLS (72 aa)) is interaction with SUZ12. The tract at residues 495–517 (TMPQKRLKRTLIRKVFNLYLSKQ) is important for nucleosome binding activity of the PRC2 complex.

The protein belongs to the AEBP2/jing C2H2-type zinc-finger family. As to quaternary structure, self-associates. Associates with the PRC2 complex, which consists of the core components EED, EZH1 or EZH2, SUZ12, and RBBP4, and various combinations of accessory subunits including AEBP2, JARID2, PHF19, MTF2 and EPOP. Found in a monomeric PRC2.2 (class 2) complex consisting of at least SUZ12, RBBP4, AEBP2 and JARID2. Within the PRC2 complex, interacts directly with SUZ12; competes with PHF19 for SUZ12 binding. Interacts with EED, EZH2, and RBBP4. May also interact with RBBP7.

It is found in the nucleus. Functionally, acts as an accessory subunit for the core Polycomb repressive complex 2 (PRC2), which mediates histone H3K27 (H3K27me3) trimethylation on chromatin leading to transcriptional repression of the affected target gene. Plays a role in nucleosome localization of the PRC2 complex. This Homo sapiens (Human) protein is Zinc finger protein AEBP2 (AEBP2).